A 252-amino-acid polypeptide reads, in one-letter code: 14-3-3 protein homolog 1 (252 aa).

Belongs to the 14-3-3 family.

This is 14-3-3 protein homolog 1 from Schistosoma mansoni (Blood fluke).